A 166-amino-acid polypeptide reads, in one-letter code: Lactose-binding lectin l-2 (166 aa).

The signal sequence occupies residues 1–24; sequence MVSFKLPAFLCVAVLSSMALVSHG. Disulfide bonds link Cys-34–Cys-45, Cys-62–Cys-160, and Cys-136–Cys-152. Residues 41-161 form the C-type lectin domain; it reads HKNRCYLHVA…CDLLFPSICV (121 aa).

Homodimer; disulfide-linked. As to expression, skin; contained within club cells which are a component of the epidermis in combination with epithelial cells and mucus cells (at protein level).

It localises to the secreted. Its function is as follows. Involved in host defense at the body surface. Causes agglutination and suppresses the growth of the Gram-negative bacterium E.coli K12. Possesses calcium-independent hemagglutinating activity. This Anguilla japonica (Japanese eel) protein is Lactose-binding lectin l-2.